Reading from the N-terminus, the 96-residue chain is uncharacterized protein (96 aa).

It belongs to the NifU family.

This is an uncharacterized protein from Azotobacter vinelandii.